Here is a 576-residue protein sequence, read N- to C-terminus: Gamma-aminobutyric acid receptor subunit beta (576 aa).

The signal sequence occupies residues 1-29 (MSDSMLYQTLQTCLPKSRLITLWLAFTLA). Residues 30–268 (MLIQEPRRHA…IQFVRSMGYY (239 aa)) are Extracellular-facing. Asn-56 carries N-linked (GlcNAc...) asparagine glycosylation. Residues Cys-183 and Cys-197 are joined by a disulfide bond. Residue Asn-251 is glycosylated (N-linked (GlcNAc...) asparagine). A run of 3 helical transmembrane segments spans residues 269-289 (LIQI…SFWL), 298-320 (VALG…AALP), and 330-350 (VYLG…ATVG). Residues 351–540 (YMAKRIQMRK…TPSDIDKYSR (190 aa)) lie on the Cytoplasmic side of the membrane. Disordered stretches follow at residues 372 to 418 (QKKQ…QTVS) and 452 to 507 (HDPK…GDAE). Residues 398 to 412 (HGHGHGHHSHGHPHV) are compositionally biased toward basic residues. Residues 475 to 490 (PVGPHGPGPQGPPGGP) show a composition bias toward pro residues. The segment covering 491–501 (PAGGGGGGAPP) has biased composition (gly residues). The helical transmembrane segment at 541 to 561 (IVFPVCFVCFNLMYWIIYLHV) threads the bilayer.

The protein belongs to the ligand-gated ion channel (TC 1.A.9) family. Gamma-aminobutyric acid receptor (TC 1.A.9.5) subfamily. In terms of assembly, homomultimer.

It localises to the postsynaptic cell membrane. The protein resides in the cell membrane. In terms of biological role, GABA, an inhibitory neurotransmitter, mediates neuronal inhibition by binding to the GABA receptor and opening an integral chloride channel. The protein is Gamma-aminobutyric acid receptor subunit beta of Musca domestica (House fly).